The primary structure comprises 115 residues: NADH-ubiquinone oxidoreductase chain 3 (115 aa).

A run of 3 helical transmembrane segments spans residues 3–23 (FMLT…IAFW), 55–75 (FFLV…LLPL), and 84–104 (LEVM…SLAY).

This sequence belongs to the complex I subunit 3 family. In terms of assembly, core subunit of respiratory chain NADH dehydrogenase (Complex I) which is composed of 45 different subunits. Interacts with TMEM186. Interacts with TMEM242.

The protein localises to the mitochondrion inner membrane. The enzyme catalyses a ubiquinone + NADH + 5 H(+)(in) = a ubiquinol + NAD(+) + 4 H(+)(out). Its function is as follows. Core subunit of the mitochondrial membrane respiratory chain NADH dehydrogenase (Complex I) which catalyzes electron transfer from NADH through the respiratory chain, using ubiquinone as an electron acceptor. Essential for the catalytic activity of complex I. The protein is NADH-ubiquinone oxidoreductase chain 3 of Rhinolophus pumilus (Horseshoe bat).